The sequence spans 97 residues: Cobalt transport protein CbiN (97 aa).

The next 2 helical transmembrane spans lie at 6-26 (VLMI…YSGL) and 68-88 (SLLF…FFGY).

Belongs to the CbiN family. Forms an energy-coupling factor (ECF) transporter complex composed of an ATP-binding protein (A component, CbiO), a transmembrane protein (T component, CbiQ) and 2 possible substrate-capture proteins (S components, CbiM and CbiN) of unknown stoichimetry.

The protein localises to the cell membrane. It functions in the pathway cofactor biosynthesis; adenosylcobalamin biosynthesis. Its function is as follows. Part of the energy-coupling factor (ECF) transporter complex CbiMNOQ involved in cobalt import. The protein is Cobalt transport protein CbiN of Methanococcus maripaludis (strain C5 / ATCC BAA-1333).